We begin with the raw amino-acid sequence, 370 residues long: Pituitary-specific positive transcription factor 1 (370 aa).

The 9aaTAD signature appears at 5–13 (AFASSDNFV). The POU-specific domain maps to 202–276 (MDSPEIRELE…ILSKWLEEAE (75 aa)). Positions 292-351 (KRKRRTTISIAAKEALERHFGEQSKPSSQEIMRMAEGLNLEKEVVRVWFCNRRQREKRVK) form a DNA-binding region, homeobox.

It belongs to the POU transcription factor family. Class-1 subfamily. As to expression, pituitary gland.

Its subcellular location is the nucleus. Functionally, transcription factor that activates growth hormone and prolactin genes. Specifically binds to the consensus sequence 5'-TAAAT-3'. In Meleagris gallopavo (Wild turkey), this protein is Pituitary-specific positive transcription factor 1 (POU1F1).